The primary structure comprises 737 residues: Palmitoyltransferase AKR1 (737 aa).

A disordered region spans residues 1–47 (MKQIDSEDSITVPNDTPEDNSASSMQPVMSNLSIEEHQSENEPIEQE). The Cytoplasmic portion of the chain corresponds to 1–304 (MKQIDSEDSI…VYFKKSLHTK (304 aa)). Over residues 9–33 (SITVPNDTPEDNSASSMQPVMSNLS) the composition is skewed to polar residues. 6 ANK repeats span residues 54–84 (PLLSKYHLACQQGDLATVKEIIENGVIDLKH), 90–119 (ERVSGLHWASINNRLSVVRYLISKDVDVNF), 124–153 (LNATPLHWAARYGYVYIVDYLLEHGADPSV), 157–190 (QGFNLLHLSINSSNIMLVIYVLFFVIDDKLDIDC), 194–223 (NGRTALLWAAYQGDSLSVETLLKFRASVKA), and 227–256 (GGFTPLHWGTVKGQAQVLKHLIENGADFFQ). The next 2 helical transmembrane spans lie at 305-325 (LVTFFAPWIFIGVLFKCFASI) and 326-346 (HPIFSLIFSILLGLGMRYTLK). The Cytoplasmic portion of the chain corresponds to 347–364 (KYVIPAYAQRNTRQSFLK). A helical transmembrane segment spans residues 365-385 (TPFLAGVFSGSVFWASYTWLT). Residues 386–396 (RIMPLTLIEEP) are Lumenal-facing. Residues 397-417 (ITNLLFFAGVVLLASLFVKLV) form a helical membrane-spanning segment. At 418 to 493 (RSDPGLIPEE…YNDIGLRNHK (76 aa)) the chain is on the cytoplasmic side. The DHHC domain maps to 450–500 (HFCISTWVRKPIRSKFSNFSRALVTRFDHFCPWIYNDIGLRNHKTFLFFIL). Cysteine 480 serves as the catalytic S-palmitoyl cysteine intermediate. The helical transmembrane segment at 494-514 (TFLFFILCLETCIFVFLKLCM) threads the bilayer. Over 515 to 547 (EYFDVLEDTFEDDYDLNCGIFGEDLCAGFFFDT) the chain is Lumenal. A helical membrane pass occupies residues 548–568 (FTFLVLAWTCFQGIWVGFLTF). At 569 to 737 (VQLFQTAKGV…ERHYLAEEIV (169 aa)) the chain is on the cytoplasmic side.

The protein belongs to the DHHC palmitoyltransferase family. AKR/ZDHHC17 subfamily.

It localises to the early endosome membrane. It is found in the golgi apparatus membrane. It carries out the reaction L-cysteinyl-[protein] + hexadecanoyl-CoA = S-hexadecanoyl-L-cysteinyl-[protein] + CoA. Its function is as follows. Palmitoyltransferase specific for casein kinase 1. In Lachancea kluyveri (strain ATCC 58438 / CBS 3082 / BCRC 21498 / NBRC 1685 / JCM 7257 / NCYC 543 / NRRL Y-12651) (Yeast), this protein is Palmitoyltransferase AKR1 (AKR1).